Consider the following 416-residue polypeptide: Calreticulin (416 aa).

The N-terminal stretch at 1 to 17 is a signal peptide; it reads MLLSVPLLLGLLGLAAA. Residues 18–197 form an N-domain region; the sequence is DPAIYFKEQF…NSQVESGSLE (180 aa). Gln-26 serves as a coordination point for Ca(2+). Lys-48 is modified (N6-acetyllysine). Ca(2+) is bound by residues Lys-62 and Lys-64. The residue at position 64 (Lys-64) is an N6-(2-hydroxyisobutyryl)lysine. Residues Cys-105 and Cys-137 are joined by a disulfide bond. An alpha-D-glucoside-binding residues include Tyr-109, Lys-111, Tyr-128, and Asp-135. Residue Lys-159 is modified to N6-acetyllysine. A 1-1 repeat occupies 191–202; that stretch reads VESGSLEDDWDF. Residues 191–255 form a 4 X approximate repeats region; sequence VESGSLEDDW…DAKKPEDWDE (65 aa). Residues 193 to 277 are disordered; sequence SGSLEDDWDF…NPEYKGEWKP (85 aa). The tract at residues 198–308 is P-domain; the sequence is DDWDFLPPKK…YSPDANIYAY (111 aa). A compositionally biased stretch (basic and acidic residues) spans 207–251; it reads KIKDPDAAKPEDWDERAKIDDPTDSKPEDWDKPEHIPDPDAKKPE. Residue Lys-209 is modified to N6-acetyllysine. 6 tandem repeats follow at residues 210 to 221, 227 to 238, 244 to 255, 259 to 269, 273 to 283, and 287 to 297. The interval 237–270 is interaction with PPIB; that stretch reads DKPEHIPDPDAKKPEDWDEEMDGEWEPPVIQNPE. A compositionally biased stretch (acidic residues) spans 252–261; the sequence is DWDEEMDGEW. Residues 259-297 form a 3 X approximate repeats region; it reads GEWEPPVIQNPEYKGEWKPRQIDNPDYKGTWIHPEIDNP. The C-domain stretch occupies residues 309-416; it reads DSFAVLGLDL…ESPGQAKDEL (108 aa). Asp-317 serves as a coordination point for an alpha-D-glucoside. Residue Asp-328 participates in Ca(2+) binding. The interval 350 to 416 is disordered; the sequence is TKAAEKQMKD…ESPGQAKDEL (67 aa). The span at 352–379 shows a compositional bias: basic and acidic residues; the sequence is AAEKQMKDKQDEEQRLKEEEEDKKRKEE. The segment covering 380–408 has biased composition (acidic residues); sequence EEAEDKEDDDDRDEDEDEEDEKEEDEEES. The Prevents secretion from ER motif lies at 413 to 416; it reads KDEL.

This sequence belongs to the calreticulin family. Monomer. Interacts with GABARAP, NR3C1, PDIA3/ERp57 and TRIM21. Interacts (via P-domain) with PDIA5. Interacts with PPIB. Interacts with SPACA9. Component of an EIF2 complex at least composed of CELF1/CUGBP1, CALR, CALR3, EIF2S1, EIF2S2, HSP90B1 and HSPA5. Interacts with CLCC1.

It is found in the endoplasmic reticulum lumen. It localises to the cytoplasm. The protein resides in the cytosol. The protein localises to the cytolytic granule. Its subcellular location is the secreted. It is found in the extracellular space. It localises to the extracellular matrix. The protein resides in the cell surface. The protein localises to the sarcoplasmic reticulum lumen. Its subcellular location is the cytoplasmic vesicle. It is found in the secretory vesicle. It localises to the cortical granule. Calcium-binding chaperone that promotes folding, oligomeric assembly and quality control in the endoplasmic reticulum (ER) via the calreticulin/calnexin cycle. This lectin interacts transiently with almost all of the monoglucosylated glycoproteins that are synthesized in the ER. Interacts with the DNA-binding domain of NR3C1 and mediates its nuclear export. Involved in maternal gene expression regulation. May participate in oocyte maturation via the regulation of calcium homeostasis. Present in the cortical granules of non-activated oocytes, is exocytosed during the cortical reaction in response to oocyte activation and might participate in the block to polyspermy. In Mus musculus (Mouse), this protein is Calreticulin (Calr).